We begin with the raw amino-acid sequence, 349 residues long: Hydroxymethylglutaryl-CoA synthase (349 aa).

Asp29 and Ala30 together coordinate (3S)-3-hydroxy-3-methylglutaryl-CoA. Glu81 serves as the catalytic Proton donor/acceptor. Residues Cys113 and Thr154 each coordinate (3S)-3-hydroxy-3-methylglutaryl-CoA. Cys113 (acyl-thioester intermediate) is an active-site residue. Residue Arg202 participates in CoA binding. (3S)-3-hydroxy-3-methylglutaryl-CoA-binding residues include Thr204 and His237. The active-site Proton donor/acceptor is the His237. Lys242 provides a ligand contact to CoA. 3 residues coordinate (3S)-3-hydroxy-3-methylglutaryl-CoA: Lys246, Asn269, and Ser299.

It belongs to the thiolase-like superfamily. Archaeal HMG-CoA synthase family. In terms of assembly, interacts with acetoacetyl-CoA thiolase that catalyzes the precedent step in the pathway and with a DUF35 protein. The acetoacetyl-CoA thiolase/HMG-CoA synthase complex channels the intermediate via a fused CoA-binding site, which allows for efficient coupling of the endergonic thiolase reaction with the exergonic HMGCS reaction.

The enzyme catalyses acetoacetyl-CoA + acetyl-CoA + H2O = (3S)-3-hydroxy-3-methylglutaryl-CoA + CoA + H(+). It functions in the pathway metabolic intermediate biosynthesis; (R)-mevalonate biosynthesis; (R)-mevalonate from acetyl-CoA: step 2/3. Functionally, catalyzes the condensation of acetyl-CoA with acetoacetyl-CoA to form 3-hydroxy-3-methylglutaryl-CoA (HMG-CoA). Functions in the mevalonate (MVA) pathway leading to isopentenyl diphosphate (IPP), a key precursor for the biosynthesis of isoprenoid compounds that are building blocks of archaeal membrane lipids. In Methanosarcina acetivorans (strain ATCC 35395 / DSM 2834 / JCM 12185 / C2A), this protein is Hydroxymethylglutaryl-CoA synthase.